The primary structure comprises 340 residues: Spermidine synthase 2 (340 aa).

Positions 1-41 are disordered; sequence MSSTQEASVTDLPVKRPREAEEDNNGGAMETENGGGEIKEP. Ser-2 carries the post-translational modification N-acetylserine. Positions 49 to 286 constitute a PABS domain; that stretch reads PGWFSEISPM…GVIGFMLCSS (238 aa). Residue Gln-80 coordinates S-adenosyl 3-(methylsulfanyl)propylamine. Tyr-110 serves as a coordination point for putrescine. Residues Gln-111, Asp-135, Glu-155, 186-187, and Asp-205 each bind S-adenosyl 3-(methylsulfanyl)propylamine; that span reads DG. Residue Asp-205 is the Proton acceptor of the active site. Residues 205-208 and Tyr-274 contribute to the putrescine site; that span reads DSSD.

It belongs to the spermidine/spermine synthase family. Heterodimer. Component of a multiprotein complex. Interacts with SPMS and SPDSYN1.

The enzyme catalyses S-adenosyl 3-(methylsulfanyl)propylamine + putrescine = S-methyl-5'-thioadenosine + spermidine + H(+). It participates in amine and polyamine biosynthesis; spermidine biosynthesis; spermidine from putrescine: step 1/1. This Arabidopsis thaliana (Mouse-ear cress) protein is Spermidine synthase 2 (SPDSYN2).